A 79-amino-acid chain; its full sequence is U1-plectoxin-Pt1c (79 aa).

A signal peptide spans 1-18; it reads HLILASALICALVVCTFA. The propeptide occupies 19–31; that stretch reads EEQVNVPFLPDER. 5 disulfides stabilise this stretch: Cys-35-Cys-49, Cys-42-Cys-55, Cys-48-Cys-66, Cys-52-Cys-75, and Cys-57-Cys-64. The propeptide occupies 78-79; it reads RR.

It belongs to the neurotoxin 02 (plectoxin) family. 02 (plectoxin) subfamily. As to expression, expressed by the venom gland.

The protein resides in the secreted. In terms of biological role, potent toxin that may paralyze and/or kill insect pests such as H.virescens (lepidoptera), S.exigua (beet armyworm) and M.sexta (tobacco hornworm). In Plectreurys tristis (Spider), this protein is U1-plectoxin-Pt1c.